The sequence spans 235 residues: tRNA pseudouridine synthase B (235 aa).

Residue aspartate 45 is the Nucleophile of the active site.

Belongs to the pseudouridine synthase TruB family. Type 1 subfamily.

The enzyme catalyses uridine(55) in tRNA = pseudouridine(55) in tRNA. Its function is as follows. Responsible for synthesis of pseudouridine from uracil-55 in the psi GC loop of transfer RNAs. In Chlamydia felis (strain Fe/C-56) (Chlamydophila felis), this protein is tRNA pseudouridine synthase B.